The primary structure comprises 157 residues: uncharacterized protein (157 aa).

One can recognise an N-acetyltransferase domain in the interval 9–154 (LLINYKTLDE…ETNLNAVTNE (146 aa)).

This is an uncharacterized protein from Bacillus cereus (strain ATCC 14579 / DSM 31 / CCUG 7414 / JCM 2152 / NBRC 15305 / NCIMB 9373 / NCTC 2599 / NRRL B-3711).